We begin with the raw amino-acid sequence, 557 residues long: Tektin-5 (557 aa).

Residues Asp302–Glu386 are a coiled coil. 6 repeat units span residues Cys507–Leu512, Cys513–Ser518, Cys519–Ser524, Cys525–Ser530, Cys531–Pro536, and Cys537–Leu541. Positions Cys507–Leu541 are 6 X 6 AA approximate tandem repeats of C-[GSK]-G-[GSPH]-A-[SLP].

Belongs to the tektin family. In terms of assembly, microtubule inner protein component of sperm flagellar doublet microtubules. Interacts with TEKT3. In terms of processing, ubiquitinated, leading to its degradation. Deubiquitinated by USP16, promoting its stability. Strongly expressed in germ cells of the testis (at protein level). Expressed in spermatozoa. Also detected in brain.

Its subcellular location is the cytoplasm. It is found in the cytoskeleton. The protein resides in the flagellum axoneme. Sperm-specific microtubule inner protein (MIP) part of the dynein-decorated doublet microtubules (DMTs) in flagellar axoneme. Forms an extensive interaction network in different conformations that reinforces the helix bundle composed by other tektin proteins (TEKT1 to TEKT4) and MIPs to anchor the tektin bundle onto the tubulin wall of A-tubule of the sperm flagellum. This chain is Tektin-5, found in Mus musculus (Mouse).